Here is a 660-residue protein sequence, read N- to C-terminus: Phosphatidylinositol-3-phosphate phosphatase MTMR7 (660 aa).

A Myotubularin phosphatase domain is found at 126 to 504 (GWVLIDLSEE…FMYKFWSGMY (379 aa)). A 1,2-diacyl-sn-glycero-3-phospho-(1D-myo-inositol-3-phosphate) contacts are provided by asparagine 250, asparagine 275, and isoleucine 276. Cysteine 338 functions as the Phosphocysteine intermediate in the catalytic mechanism. Positions 339, 340, 341, 342, 343, 344, and 384 each coordinate a 1,2-diacyl-sn-glycero-3-phospho-(1D-myo-inositol-3-phosphate). Positions 514 to 558 (RQSVTDYLMAVKEETQQLEEELEALEERLEKIQKVQLNCTKVKSK) form a coiled coil. A disordered region spans residues 554-660 (KVKSKQSEPS…DSDEAVFLTA (107 aa)). Residues 566-596 (SGFSTSDNSIANTPQDYSGNMKSFPSRSPSQ) are compositionally biased toward polar residues. Residue threonine 578 is modified to Phosphothreonine. The segment covering 641–653 (APSEDSGKDRDSD) has biased composition (basic and acidic residues).

It belongs to the protein-tyrosine phosphatase family. Non-receptor class myotubularin subfamily. In terms of assembly, heterodimer (via C-terminus) with MTMR9 (via coiled coil domain); the interaction enhances MTMR7 catalytic activity. Does not homodimerize. Interacts with RAB1B (in GDP-bound form).

It is found in the cytoplasm. Its subcellular location is the endomembrane system. The catalysed reaction is a 1,2-diacyl-sn-glycero-3-phospho-(1D-myo-inositol-3-phosphate) + H2O = a 1,2-diacyl-sn-glycero-3-phospho-(1D-myo-inositol) + phosphate. It carries out the reaction 1D-myo-inositol 1,3-bisphosphate + H2O = 1D-myo-inositol 1-phosphate + phosphate. Its activity is regulated as follows. Interaction with MTMR9 increases phosphatase activity. Lipid phosphatase that specifically dephosphorylates the D-3 position of phosphatidylinositol 3-phosphate (PtdIns(3)P) and inositol 1,3-bisphosphate (Ins(1,3)P2). This is Phosphatidylinositol-3-phosphate phosphatase MTMR7 from Pongo abelii (Sumatran orangutan).